A 188-amino-acid polypeptide reads, in one-letter code: Putative 3-methyladenine DNA glycosylase (188 aa).

It belongs to the DNA glycosylase MPG family.

The protein is Putative 3-methyladenine DNA glycosylase of Ehrlichia ruminantium (strain Welgevonden).